Here is a 278-residue protein sequence, read N- to C-terminus: uncharacterized protein (278 aa).

This is an uncharacterized protein from Escherichia coli (strain K12).